Here is a 177-residue protein sequence, read N- to C-terminus: Large ribosomal subunit protein uL6 (177 aa).

Lys44 bears the N6-acetyllysine mark.

This sequence belongs to the universal ribosomal protein uL6 family. In terms of assembly, part of the 50S ribosomal subunit.

Its function is as follows. This protein binds to the 23S rRNA, and is important in its secondary structure. It is located near the subunit interface in the base of the L7/L12 stalk, and near the tRNA binding site of the peptidyltransferase center. This Shigella sonnei (strain Ss046) protein is Large ribosomal subunit protein uL6.